An 825-amino-acid polypeptide reads, in one-letter code: MATSERALLRTRAASLLRGLGRSRTGARSLQFRAEKERQPCWSFPMGQKTKGSSNIASSYLLQQLMHRYQELDSDGDEDQGEGEAGSEESSESEMLNLEEEFDGVLREEAVAKALHHLGRSGSGTEQVYLNLTLSGCNLIDVSILCGYVHLQKLDLSANKIEDLSCVSCMPYLLELNASQNNLTTFFNFKPPKNLKKADFSHNQISEICDLSAYHALTKLILDGNEIEEISGLEMCNNLIHLSLANNKITTINGLNKLPIKILCLSNNQIEMITGLEDLKALQNLDLSHNQISSLQGLENHDLLEVINLEDNKIAELREIEYIKNLPILRVLNLLENPIQEKSEYWFFVIFMLLRLTELDQKKIKVEEKVSAVNKYDPPPEVVAAQDHLTHVVNSVMQPQRIFDSTLPSLDAPYPMLILAGPEACGKRELAHRLCRQFSTYFRYGACHTTRPPYFGEGDRVDYHFISQDVFDEMVNMGKFILTFSYGNHKYGLNRDTVEGIARDGLASCIHMEIEGVRSLKYSYFEPRYILVVPMNKEKYEGYLRRKGLFSRAEIEFAVSRVDLYIKINQNFPGYFDEVINADDLDVAYQKLSQLIREYLGLTEEPAKSLATTADVKTSHLKPEAHPTKYISSNMGDFLHSTDRNYLIKFWAKLSAKKTPAERDSIHRQHEAARQALMGRIRPDHTLLFQRGPVPAPLTSGLHYYTTLEELWKSFDLCEDYFKPPFGPYPEKSGKDSLVSMKCSLFRFCPWSKELPFQPPEGSISSHLGSGASDSETEETRKALPIQSFSHEKESHQHRQHSVPVISRPGSNVKPTLPPIPQGRR.

The interval 73-96 (DSDGDEDQGEGEAGSEESSESEML) is disordered. LRR repeat units follow at residues 129–149 (YLNLTLSGCNLIDVSILCGYV), 150–171 (HLQKLDLSANKIEDLSCVSCMP), 172–193 (YLLELNASQNNLTTFFNFKPPK), 194–215 (NLKKADFSHNQISEICDLSAYH), 216–237 (ALTKLILDGNEIEEISGLEMCN), 238–259 (NLIHLSLANNKITTINGLNKLP), 260–280 (IKILCLSNNQIEMITGLEDLK), 281–302 (ALQNLDLSHNQISSLQGLENHD), and 303–324 (LLEVINLEDNKIAELREIEYIK). The LRRCT domain occupies 337 to 375 (NPIQEKSEYWFFVIFMLLRLTELDQKKIKVEEKVSAVNK). In terms of domain architecture, Guanylate kinase-like spans 414–597 (YPMLILAGPE…AYQKLSQLIR (184 aa)). 421–428 (GPEACGKR) lines the ATP pocket. Residues 760–825 (PEGSISSHLG…TLPPIPQGRR (66 aa)) form a disordered region. Polar residues predominate over residues 763 to 774 (SISSHLGSGASD). A compositionally biased stretch (pro residues) spans 816 to 825 (TLPPIPQGRR).

In terms of assembly, interacts (via guanylate kinase-like domain) with RIMBP3 (via coiled-coil region). Interacts (via guanylate kinase-like domain) with HOOK2. Interacts (via LRRCT domain) with KLC3. Interacts with HOOK1 and HOOK3.

It localises to the cytoplasmic vesicle. The protein resides in the secretory vesicle. Its subcellular location is the acrosome. It is found in the cytoplasm. The protein localises to the cytoskeleton. It localises to the cilium basal body. Functionally, involved in multiple aspects of sperm assembly including acrosome attachment, shaping of the sperm head and in the early aspects of axoneme development. Not essential for primary cilium biogenesis. The sequence is that of Leucine-rich repeat and guanylate kinase domain-containing protein (LRGUK) from Homo sapiens (Human).